The following is a 168-amino-acid chain: Dual-action ribosomal maturation protein DarP (168 aa).

The protein belongs to the DarP family.

Its subcellular location is the cytoplasm. Functionally, member of a network of 50S ribosomal subunit biogenesis factors which assembles along the 30S-50S interface, preventing incorrect 23S rRNA structures from forming. Promotes peptidyl transferase center (PTC) maturation. The sequence is that of Dual-action ribosomal maturation protein DarP from Neisseria meningitidis serogroup B (strain ATCC BAA-335 / MC58).